A 65-amino-acid chain; its full sequence is Large ribosomal subunit protein bL35 (65 aa).

It belongs to the bacterial ribosomal protein bL35 family.

The chain is Large ribosomal subunit protein bL35 from Yersinia enterocolitica serotype O:8 / biotype 1B (strain NCTC 13174 / 8081).